A 429-amino-acid polypeptide reads, in one-letter code: G2/mitotic-specific cyclin-B1 (429 aa).

Residues 71-114 (TGKVSAKIPPPKPLEKVPPVSEPEVELAETHEPEPVMDEKLSPE) form a disordered region. The residue at position 73 (Lys73) is an N6-acetyllysine. The span at 98–112 (AETHEPEPVMDEKLS) shows a compositional bias: basic and acidic residues. Phosphoserine; by CDK1 is present on Ser122. Ser124 carries the phosphoserine modification. Ser129 is subject to Phosphoserine; by PLK1. Position 143 is a phosphoserine (Ser143). Interaction with CDK2 stretches follow at residues 165 to 173 (EYVKDIYAY) and 254 to 257 (YEEM). Thr317 carries the post-translational modification Phosphothreonine.

The protein belongs to the cyclin family. Cyclin AB subfamily. Interacts with the CDC2 protein kinase to form a serine/threonine kinase holoenzyme complex also known as maturation promoting factor (MPF). The cyclin subunit imparts substrate specificity to the complex. Binds HEI10. Interacts with catalytically active RALBP1 and CDC2 during mitosis to form an endocytotic complex during interphase. Interacts with CCNF; interaction is required for nuclear localization. Interacts with CDK5RAP3. Interacts with RFPL4A and UBE2A. Interacts with INCA1. Ubiquitinated by the SCF(NIPA) complex during interphase, leading to its destruction. Not ubiquitinated during G2/M phases. Post-translationally, phosphorylated by PLK1 at Ser-129 on centrosomes during prophase: phosphorylation by PLK1 does not cause nuclear import. Phosphorylation at Ser-143 was also reported to be mediated by PLK1 but Ser-129 seems to be the primary phosphorylation site.

The protein resides in the cytoplasm. It is found in the nucleus. It localises to the cytoskeleton. The protein localises to the microtubule organizing center. Its subcellular location is the centrosome. Its function is as follows. Essential for the control of the cell cycle at the G2/M (mitosis) transition. This chain is G2/mitotic-specific cyclin-B1 (CCNB1), found in Mesocricetus auratus (Golden hamster).